The chain runs to 314 residues: Porphobilinogen deaminase (314 aa).

Cys-249 is modified (S-(dipyrrolylmethanemethyl)cysteine).

It belongs to the HMBS family. Monomer. Dipyrromethane serves as cofactor.

It carries out the reaction 4 porphobilinogen + H2O = hydroxymethylbilane + 4 NH4(+). Its pathway is porphyrin-containing compound metabolism; protoporphyrin-IX biosynthesis; coproporphyrinogen-III from 5-aminolevulinate: step 2/4. Functionally, tetrapolymerization of the monopyrrole PBG into the hydroxymethylbilane pre-uroporphyrinogen in several discrete steps. This is Porphobilinogen deaminase from Brucella abortus (strain S19).